The primary structure comprises 189 residues: MARLCAFLMVLPVLSYWPTCSLGCDLPQTHNLRNKRALTLLVKMRRLSPLSCLKDRKDFGFPQEKVGAQQIQEAQAIPVLSELTQQVLNIFTSKDSSAAWNATLLDSFCNEVHQQLNDLKACVMQQVGVQESPLTQEDSLLAVRKYFHRITVYLREKKHSPCAWEVVRAEVWRALSSSVNLLARLSKEE.

The N-terminal stretch at Met-1–Gly-23 is a signal peptide. Cystine bridges form between Cys-24–Cys-122 and Cys-52–Cys-162. The N-linked (GlcNAc...) asparagine glycan is linked to Asn-101.

Belongs to the alpha/beta interferon family.

It localises to the secreted. Produced by macrophages, IFN-alpha have antiviral activities. Interferon stimulates the production of two enzymes: a protein kinase and an oligoadenylate synthetase. This Mus musculus (Mouse) protein is Interferon alpha-5 (Ifna5).